Here is a 292-residue protein sequence, read N- to C-terminus: 4-hydroxy-tetrahydrodipicolinate synthase (292 aa).

Pyruvate is bound at residue T45. The Proton donor/acceptor role is filled by Y133. K161 functions as the Schiff-base intermediate with substrate in the catalytic mechanism. I203 contacts pyruvate.

This sequence belongs to the DapA family. As to quaternary structure, homotetramer; dimer of dimers.

Its subcellular location is the cytoplasm. The enzyme catalyses L-aspartate 4-semialdehyde + pyruvate = (2S,4S)-4-hydroxy-2,3,4,5-tetrahydrodipicolinate + H2O + H(+). Its pathway is amino-acid biosynthesis; L-lysine biosynthesis via DAP pathway; (S)-tetrahydrodipicolinate from L-aspartate: step 3/4. Its function is as follows. Catalyzes the condensation of (S)-aspartate-beta-semialdehyde [(S)-ASA] and pyruvate to 4-hydroxy-tetrahydrodipicolinate (HTPA). This chain is 4-hydroxy-tetrahydrodipicolinate synthase, found in Aromatoleum aromaticum (strain DSM 19018 / LMG 30748 / EbN1) (Azoarcus sp. (strain EbN1)).